A 4466-amino-acid polypeptide reads, in one-letter code: Dynein beta chain, ciliary (4466 aa).

The segment at 1–1813 (MADVVDPRLE…YANICDAQFK (1813 aa)) is stem. Position 154 to 161 (154 to 161 (AGQVKGKT)) interacts with ATP. 4 coiled-coil regions span residues 733-805 (TVLE…WTKQ), 1036-1056 (TLDQ…EADE), 1306-1337 (WLEI…AWDA), and 1443-1468 (LLKS…MTSK). AAA regions lie at residues 1814-2035 (YSYE…VLVV), 2095-2316 (KVVK…VRFK), 2422-2669 (ELDP…VFQG), and 2767-3016 (TYNE…ERRY). ATP is bound by residues 1852-1859 (GPAGTGKT), 2133-2140 (GNAGTGKS), 2460-2467 (GNAGLGKS), and 2805-2812 (GVGGSGKQ). Coiled-coil stretches lie at residues 3033–3092 (SLLS…QVVG), 3263–3325 (EPKR…SRTI), and 3573–3642 (QERP…EEAK). The interval 3033–3325 (SLLSMKSKEL…QEAEATSRTI (293 aa)) is stalk. 2 AAA regions span residues 3409–3636 (LTDD…EISV) and 3846–4072 (VRNF…VLYN).

The protein belongs to the dynein heavy chain family. Consists of at least two heavy chains (alpha and beta), three intermediate chains and several light chains.

Its subcellular location is the cell projection. The protein localises to the cilium. It is found in the flagellum. The protein resides in the cytoplasm. It localises to the cytoskeleton. Its subcellular location is the flagellum axoneme. Its function is as follows. Force generating protein of eukaryotic cilia and flagella. Produces force towards the minus ends of microtubules. Dynein has ATPase activity; the force-producing power stroke is thought to occur on release of ADP. This is Dynein beta chain, ciliary from Tripneustes gratilla (Hawaian sea urchin).